The following is a 129-amino-acid chain: Protein Turandot C (129 aa).

Residues methionine 1 to glycine 21 form the signal peptide.

This sequence belongs to the Turandot family.

Its subcellular location is the secreted. Its function is as follows. A humoral factor that may play a role in stress tolerance. The sequence is that of Protein Turandot C from Drosophila melanogaster (Fruit fly).